Here is a 197-residue protein sequence, read N- to C-terminus: Imidazoleglycerol-phosphate dehydratase (197 aa).

This sequence belongs to the imidazoleglycerol-phosphate dehydratase family.

The protein resides in the cytoplasm. It carries out the reaction D-erythro-1-(imidazol-4-yl)glycerol 3-phosphate = 3-(imidazol-4-yl)-2-oxopropyl phosphate + H2O. Its pathway is amino-acid biosynthesis; L-histidine biosynthesis; L-histidine from 5-phospho-alpha-D-ribose 1-diphosphate: step 6/9. The sequence is that of Imidazoleglycerol-phosphate dehydratase from Stutzerimonas stutzeri (strain A1501) (Pseudomonas stutzeri).